A 413-amino-acid polypeptide reads, in one-letter code: Putative adhesin P1-like protein MPN_144 (413 aa).

Composition is skewed to polar residues over residues 1 to 13 (MGQQ…SAGN), 25 to 54 (SGDS…NLTP), and 355 to 376 (SFGT…VFGT). Disordered regions lie at residues 1 to 60 (MGQQ…DWPN) and 355 to 413 (SFGT…VSGH). Residues 385-399 (LSGGGAGGGSSGSGQ) are compositionally biased toward gly residues.

It belongs to the adhesin P1 family.

The protein is Putative adhesin P1-like protein MPN_144 of Mycoplasma pneumoniae (strain ATCC 29342 / M129 / Subtype 1) (Mycoplasmoides pneumoniae).